The primary structure comprises 155 residues: Ribosomal RNA large subunit methyltransferase H (155 aa).

Residues Leu-73, Gly-104, and 123-128 (ISKMTF) each bind S-adenosyl-L-methionine.

It belongs to the RNA methyltransferase RlmH family. As to quaternary structure, homodimer.

The protein resides in the cytoplasm. The enzyme catalyses pseudouridine(1915) in 23S rRNA + S-adenosyl-L-methionine = N(3)-methylpseudouridine(1915) in 23S rRNA + S-adenosyl-L-homocysteine + H(+). Functionally, specifically methylates the pseudouridine at position 1915 (m3Psi1915) in 23S rRNA. The polypeptide is Ribosomal RNA large subunit methyltransferase H (Francisella philomiragia subsp. philomiragia (strain ATCC 25017 / CCUG 19701 / FSC 153 / O#319-036)).